The sequence spans 149 residues: Putative glycine cleavage system H protein 3 (149 aa).

In terms of domain architecture, Lipoyl-binding spans 39-121 (TCTLGITKYA…EDKGWLIKME (83 aa)). Position 80 is an N6-lipoyllysine (Lys80).

The protein belongs to the GcvH family. As to quaternary structure, the glycine cleavage system is composed of four proteins: P, T, L and H. (R)-lipoate serves as cofactor.

The glycine cleavage system catalyzes the degradation of glycine. The H protein shuttles the methylamine group of glycine from the P protein to the T protein. In Dictyostelium discoideum (Social amoeba), this protein is Putative glycine cleavage system H protein 3 (gcvH3).